The primary structure comprises 788 residues: Pre-rRNA-processing protein TSR1 homolog (788 aa).

Residues 1-40 (MSTTGHRAGVFKKPAKPHKSWKGKRTKGEITTENRGREGV) form a disordered region. Residues 9–25 (GVFKKPAKPHKSWKGKR) are compositionally biased toward basic residues. The span at 26-40 (TKGEITTENRGREGV) shows a compositional bias: basic and acidic residues. The 161-residue stretch at 83 to 243 (APCLVTILSL…LRTLNETKKK (161 aa)) folds into the Bms1-type G domain. The interval 354-433 (LEEADKEMRR…ASEMMFHDEI (80 aa)) is disordered. Residues 378-412 (DDSEDDEDEEDEDEDMDDEEEDKDLEEDDEEEDTP) show a composition bias toward acidic residues.

It belongs to the TRAFAC class translation factor GTPase superfamily. Bms1-like GTPase family. TSR1 subfamily.

The protein localises to the nucleus. It is found in the nucleolus. Required during maturation of the 40S ribosomal subunit in the nucleolus. This Caenorhabditis briggsae protein is Pre-rRNA-processing protein TSR1 homolog.